The following is a 466-amino-acid chain: ATP synthase subunit beta (466 aa).

156–163 is an ATP binding site; that stretch reads GGAGVGKT.

It belongs to the ATPase alpha/beta chains family. F-type ATPases have 2 components, CF(1) - the catalytic core - and CF(0) - the membrane proton channel. CF(1) has five subunits: alpha(3), beta(3), gamma(1), delta(1), epsilon(1). CF(0) has three main subunits: a(1), b(2) and c(9-12). The alpha and beta chains form an alternating ring which encloses part of the gamma chain. CF(1) is attached to CF(0) by a central stalk formed by the gamma and epsilon chains, while a peripheral stalk is formed by the delta and b chains.

The protein resides in the cell inner membrane. It catalyses the reaction ATP + H2O + 4 H(+)(in) = ADP + phosphate + 5 H(+)(out). In terms of biological role, produces ATP from ADP in the presence of a proton gradient across the membrane. The catalytic sites are hosted primarily by the beta subunits. The chain is ATP synthase subunit beta from Dechloromonas aromatica (strain RCB).